Here is a 551-residue protein sequence, read N- to C-terminus: Glucans biosynthesis protein D (551 aa).

Positions 1–32 form a signal peptide, tat-type signal; the sequence is MNRRRFLQGSLAMAALSGTTGLSTLFSRAAFA.

The protein belongs to the OpgD/OpgG family. Predicted to be exported by the Tat system. The position of the signal peptide cleavage has not been experimentally proven.

The protein resides in the periplasm. It functions in the pathway glycan metabolism; osmoregulated periplasmic glucan (OPG) biosynthesis. Its function is as follows. Probably involved in the control of the structural glucose backbone of osmoregulated periplasmic glucans (OPGs). The polypeptide is Glucans biosynthesis protein D (Enterobacter sp. (strain 638)).